Consider the following 393-residue polypeptide: Serine/threonine-protein phosphatase 2A activator 1 (393 aa).

Positions 328-393 (EKEEESIEQA…TSFSRDRLRR (66 aa)) are disordered. Polar residues-rich tracts occupy residues 335 to 356 (EQAN…TSTS) and 365 to 386 (SGNN…QTSF). Serine 341 carries the phosphoserine modification.

It belongs to the PTPA-type PPIase family. Interacts with the phosphatase PP2A-like catalytic subunits PPG1, PPH3 and SIT4. Forms a ternary complex with SIT4-TAP42.

It is found in the cytoplasm. The protein localises to the nucleus. The enzyme catalyses [protein]-peptidylproline (omega=180) = [protein]-peptidylproline (omega=0). Functionally, PPIases accelerate the folding of proteins. It catalyzes the cis-trans isomerization of proline imidic peptide bonds in oligopeptides. Acts as a regulatory subunit for TAP42-associated PP2A-like phosphatases modulating their activity or substrate specificity, probably by inducing a conformational change in the catalytic subunit, a direct target of the PPIase. Can reactivate inactive phosphatase PP2A-phosphatase methylesterase complexes (PP2Ai) in presence of ATP and Mg(2+) by dissociating the inactive form from the complex. Involved in the regulation of cell cycle progression, mitotic spindle formation, bud morphogenesis and DNA repair. This is Serine/threonine-protein phosphatase 2A activator 1 (RRD1) from Saccharomyces cerevisiae (strain ATCC 204508 / S288c) (Baker's yeast).